The chain runs to 457 residues: Secreted RxLR effector protein 8 (457 aa).

Positions 1-19 (MRGTLATALLLVISSRVAT) are cleaved as a signal peptide. A RxLR-dEER motif is present at residues 48 to 69 (RFLRGSRKQRDDLAPTAADENR). Residue N68 is glycosylated (N-linked (GlcNAc...) asparagine). Disordered regions lie at residues 110–188 (RLSL…ALKS) and 398–457 (RQTI…RSSS). A compositionally biased stretch (low complexity) spans 135-152 (SASTSTTSDIATSSSRTS). Composition is skewed to polar residues over residues 153–163 (NQRTPKTQASL) and 176–187 (SKNQFKKSTALK). The segment covering 442 to 457 (IKSKDHARKKRPRSSS) has biased composition (basic residues).

Belongs to the RxLR effector family.

It localises to the secreted. Its subcellular location is the host nucleus. Functionally, secreted effector that completely suppresses the host cell death induced by cell death-inducing proteins. This chain is Secreted RxLR effector protein 8, found in Plasmopara viticola (Downy mildew of grapevine).